The sequence spans 581 residues: Sodium/hydrogen exchanger 8 (581 aa).

11 consecutive transmembrane segments (helical) span residues 60–80, 84–104, 123–143, 156–176, 191–211, 264–284, 311–331, 354–374, 379–399, 417–437, and 451–471; these read MTIFFSLLVLAICIILVHLLI, LHFLPESVAVVSLGILMGAVI, PNMFFLLLLPPIIFESGYSLH, LFAVFGTAISAFVVGGGIYFL, FAFGSLISAVDPVATIAIFNA, FLKMFFGSAALGTLTGLISAL, GLAEGISLSGIMAILFSGIVM, VAFLCETCVFAFLGLSIFSFP, ISFVIWCIVLVLFGRAVNIFP, MFIMWFSGLRGAIPYALSLHL, and TTIVIVLFTILLLGGSTMPLI. Thr-510 is modified (phosphothreonine). Ser-571 and Ser-573 each carry phosphoserine.

The protein belongs to the monovalent cation:proton antiporter 1 (CPA1) transporter (TC 2.A.36) family. Ubiquitous. Strongly expressed in skeletal muscle and kidney. Detected throughout the entire gastrointestinal tract, with high expression detected in stomach, duodenum and ascending colon.

It localises to the golgi apparatus membrane. It is found in the golgi apparatus. The protein localises to the trans-Golgi network membrane. The protein resides in the endosome. Its subcellular location is the multivesicular body membrane. It localises to the apical cell membrane. It is found in the cytoplasmic vesicle. The protein localises to the secretory vesicle. The protein resides in the acrosome. It carries out the reaction Na(+)(in) + H(+)(out) = Na(+)(out) + H(+)(in). Its activity is regulated as follows. HOE642 inhibits SLC9A8 activity. Na(+)/H(+) antiporter. Mediates the electoneutral exchange of intracellular H(+) ions for extracellular Na(+) in 1:1 stoichiometry. Acts as an Na(+)/H(+) exchanger in the trans-Golgi. Contributes to the regulation of pH regulation of Golgi apparatus, and consequently, in protein trafficking and endosomal morphology. In germ cells, plays a crucial role in acrosome biogenesis and sperm development, probably by playing a role in the fusion of the Golgi-derived vesicles that form the acrosomal cap. Can also be active at the cell surface of specialized cells. In the small intestine, at the cell membrane, plays a major physiological role in transepithelial absorption of Na(+) and regulates intracellular pH homeostasis of intestinal epithelial cells. Acts as an important regulator of mucosal integrity in the intestine and in the stomach, could mediate the pH fluctuation necessary for mucin exocytosis or assist membrane trafficking of other proteins. Plays a role in photoreceptor survival and in the maintenance of intracellular pH homeostasis in retinal pigment epithelium (RPE cells). This Homo sapiens (Human) protein is Sodium/hydrogen exchanger 8.